We begin with the raw amino-acid sequence, 95 residues long: Mitochondrial import inner membrane translocase subunit Tim9 (95 aa).

Positions 35-59 (CFTDCIRDFTTRDVKDSEEKCSLNC) match the Twin CX3C motif motif. 2 cysteine pairs are disulfide-bonded: C35/C59 and C39/C55.

Belongs to the small Tim family. Heterohexamer; composed of 3 copies of Tim9 and 3 copies of Tim10, named soluble 70 kDa complex. The complex associates with the Tim22 component of the TIM22 complex. Interacts with multi-pass transmembrane proteins in transit.

Its subcellular location is the mitochondrion inner membrane. Functionally, mitochondrial intermembrane chaperone that participates in the import and insertion of multi-pass transmembrane proteins into the mitochondrial inner membrane. May also be required for the transfer of beta-barrel precursors from the TOM complex to the sorting and assembly machinery (SAM complex) of the outer membrane. Acts as a chaperone-like protein that protects the hydrophobic precursors from aggregation and guide them through the mitochondrial intermembrane space. In Drosophila melanogaster (Fruit fly), this protein is Mitochondrial import inner membrane translocase subunit Tim9 (Tim9a).